Consider the following 506-residue polypeptide: Phenylacetaldehyde synthase (506 aa).

Residues proline 101, histidine 202, and histidine 317 each coordinate L-phenylalanine. Position 318 is an N6-(pyridoxal phosphate)lysine (lysine 318).

The protein belongs to the group II decarboxylase family. Homotetramer. Pyridoxal 5'-phosphate is required as a cofactor. As to expression, highly expressed in corolla limbs and at lower levels in corolla tubes and ovaries.

The enzyme catalyses L-phenylalanine + O2 + H2O + H(+) = 2-phenylacetaldehyde + H2O2 + NH4(+) + CO2. Functionally, bifunctional enzyme that catalyzes the decarboxylation of L-phenylalanine to 2-phenylethylamine, which is then oxidized to form 2-phenylacetaldehyde, a constituent of floral scent. 2-phenylacetaldehyde is a precursor of 2-phenylethanol, another constituent of floral scent. The polypeptide is Phenylacetaldehyde synthase (Petunia hybrida (Petunia)).